A 140-amino-acid chain; its full sequence is ATP synthase epsilon chain (140 aa).

The protein belongs to the ATPase epsilon chain family. F-type ATPases have 2 components, CF(1) - the catalytic core - and CF(0) - the membrane proton channel. CF(1) has five subunits: alpha(3), beta(3), gamma(1), delta(1), epsilon(1). CF(0) has three main subunits: a, b and c.

The protein localises to the cell inner membrane. Functionally, produces ATP from ADP in the presence of a proton gradient across the membrane. This chain is ATP synthase epsilon chain, found in Neisseria meningitidis serogroup C (strain 053442).